The primary structure comprises 188 residues: GTPase KRas (188 aa).

GTP-binding positions include 10 to 18, 29 to 35, 59 to 60, and 116 to 119; these read GAGGVGKSA, VDEYDPT, AG, and NKCD. Residues 32 to 40 carry the Effector region motif; sequence YDPTIEDSY. Residues 168-188 are disordered; sequence EKMSKDGKKKKKKTKTKCIIM. C185 carries the cysteine methyl ester modification. C185 carries S-farnesyl cysteine lipidation. Residues 186–188 constitute a propeptide, removed in mature form; sequence IIM.

The protein belongs to the small GTPase superfamily. Ras family.

The protein resides in the cell membrane. It is found in the cytoplasm. It catalyses the reaction GTP + H2O = GDP + phosphate + H(+). With respect to regulation, alternates between an inactive form bound to GDP and an active form bound to GTP. Activated by a guanine nucleotide-exchange factor (GEF) and inactivated by a GTPase-activating protein (GAP). In terms of biological role, ras proteins bind GDP/GTP and possess intrinsic GTPase activity. Plays an important role in the regulation of cell proliferation. May play a role in promoting oncogenic events by inducing transcriptional silencing of tumor suppressor genes (TSGs). This chain is GTPase KRas (KRAS), found in Meleagris gallopavo (Wild turkey).